A 354-amino-acid chain; its full sequence is Uroporphyrinogen decarboxylase (354 aa).

Substrate contacts are provided by residues 27–31 (RQAGR), phenylalanine 46, aspartate 77, tyrosine 154, threonine 209, and histidine 327.

Belongs to the uroporphyrinogen decarboxylase family. As to quaternary structure, homodimer.

It localises to the cytoplasm. The enzyme catalyses uroporphyrinogen III + 4 H(+) = coproporphyrinogen III + 4 CO2. The protein operates within porphyrin-containing compound metabolism; protoporphyrin-IX biosynthesis; coproporphyrinogen-III from 5-aminolevulinate: step 4/4. Catalyzes the decarboxylation of four acetate groups of uroporphyrinogen-III to yield coproporphyrinogen-III. The polypeptide is Uroporphyrinogen decarboxylase (Photorhabdus laumondii subsp. laumondii (strain DSM 15139 / CIP 105565 / TT01) (Photorhabdus luminescens subsp. laumondii)).